The chain runs to 262 residues: Hydroxyethylthiazole kinase (262 aa).

Residue methionine 50 participates in substrate binding. Positions 125 and 171 each coordinate ATP. Glycine 198 contacts substrate.

Belongs to the Thz kinase family. Mg(2+) serves as cofactor.

It catalyses the reaction 5-(2-hydroxyethyl)-4-methylthiazole + ATP = 4-methyl-5-(2-phosphooxyethyl)-thiazole + ADP + H(+). The protein operates within cofactor biosynthesis; thiamine diphosphate biosynthesis; 4-methyl-5-(2-phosphoethyl)-thiazole from 5-(2-hydroxyethyl)-4-methylthiazole: step 1/1. Its function is as follows. Catalyzes the phosphorylation of the hydroxyl group of 4-methyl-5-beta-hydroxyethylthiazole (THZ). The polypeptide is Hydroxyethylthiazole kinase (Shigella flexneri serotype 5b (strain 8401)).